The following is a 67-amino-acid chain: DNA-directed RNA polymerase subunit omega (67 aa).

It belongs to the RNA polymerase subunit omega family. As to quaternary structure, the RNAP catalytic core consists of 2 alpha, 1 beta, 1 beta' and 1 omega subunit. When a sigma factor is associated with the core the holoenzyme is formed, which can initiate transcription.

The enzyme catalyses RNA(n) + a ribonucleoside 5'-triphosphate = RNA(n+1) + diphosphate. Promotes RNA polymerase assembly. Latches the N- and C-terminal regions of the beta' subunit thereby facilitating its interaction with the beta and alpha subunits. In Leptothrix cholodnii (strain ATCC 51168 / LMG 8142 / SP-6) (Leptothrix discophora (strain SP-6)), this protein is DNA-directed RNA polymerase subunit omega.